The chain runs to 467 residues: 3-isopropylmalate dehydratase large subunit (467 aa).

Positions 347, 407, and 410 each coordinate [4Fe-4S] cluster.

This sequence belongs to the aconitase/IPM isomerase family. LeuC type 1 subfamily. As to quaternary structure, heterodimer of LeuC and LeuD. [4Fe-4S] cluster serves as cofactor.

It catalyses the reaction (2R,3S)-3-isopropylmalate = (2S)-2-isopropylmalate. It functions in the pathway amino-acid biosynthesis; L-leucine biosynthesis; L-leucine from 3-methyl-2-oxobutanoate: step 2/4. Catalyzes the isomerization between 2-isopropylmalate and 3-isopropylmalate, via the formation of 2-isopropylmaleate. The chain is 3-isopropylmalate dehydratase large subunit from Synechococcus sp. (strain JA-3-3Ab) (Cyanobacteria bacterium Yellowstone A-Prime).